The following is a 429-amino-acid chain: Saccharopine dehydrogenase-like oxidoreductase (429 aa).

Ala2 carries the post-translational modification N-acetylalanine. Ser217 bears the Phosphoserine mark.

The protein belongs to the saccharopine dehydrogenase family.

The sequence is that of Saccharopine dehydrogenase-like oxidoreductase (SCCPDH) from Pongo abelii (Sumatran orangutan).